A 331-amino-acid chain; its full sequence is Homoserine kinase (331 aa).

Belongs to the pseudomonas-type ThrB family.

The enzyme catalyses L-homoserine + ATP = O-phospho-L-homoserine + ADP + H(+). It functions in the pathway amino-acid biosynthesis; L-threonine biosynthesis; L-threonine from L-aspartate: step 4/5. This chain is Homoserine kinase, found in Burkholderia thailandensis (strain ATCC 700388 / DSM 13276 / CCUG 48851 / CIP 106301 / E264).